The sequence spans 515 residues: Probable cytosol aminopeptidase (515 aa).

Mn(2+) contacts are provided by Lys279 and Asp284. Lys291 is a catalytic residue. Residues Asp302, Asp361, and Glu363 each coordinate Mn(2+). Arg365 is an active-site residue.

Belongs to the peptidase M17 family. Requires Mn(2+) as cofactor.

The protein resides in the cytoplasm. The catalysed reaction is Release of an N-terminal amino acid, Xaa-|-Yaa-, in which Xaa is preferably Leu, but may be other amino acids including Pro although not Arg or Lys, and Yaa may be Pro. Amino acid amides and methyl esters are also readily hydrolyzed, but rates on arylamides are exceedingly low.. The enzyme catalyses Release of an N-terminal amino acid, preferentially leucine, but not glutamic or aspartic acids.. In terms of biological role, presumably involved in the processing and regular turnover of intracellular proteins. Catalyzes the removal of unsubstituted N-terminal amino acids from various peptides. This chain is Probable cytosol aminopeptidase, found in Mycobacterium tuberculosis (strain ATCC 25177 / H37Ra).